Reading from the N-terminus, the 404-residue chain is CCA-adding enzyme (404 aa).

G27 and R30 together coordinate ATP. CTP is bound by residues G27 and R30. D40 and D42 together coordinate Mg(2+). Positions 111, 154, 157, 160, and 163 each coordinate ATP. CTP contacts are provided by R111, D154, R157, R160, and R163.

It belongs to the tRNA nucleotidyltransferase/poly(A) polymerase family. Bacterial CCA-adding enzyme type 3 subfamily. Homodimer. It depends on Mg(2+) as a cofactor.

It catalyses the reaction a tRNA precursor + 2 CTP + ATP = a tRNA with a 3' CCA end + 3 diphosphate. The catalysed reaction is a tRNA with a 3' CCA end + 2 CTP + ATP = a tRNA with a 3' CCACCA end + 3 diphosphate. Catalyzes the addition and repair of the essential 3'-terminal CCA sequence in tRNAs without using a nucleic acid template. Adds these three nucleotides in the order of C, C, and A to the tRNA nucleotide-73, using CTP and ATP as substrates and producing inorganic pyrophosphate. tRNA 3'-terminal CCA addition is required both for tRNA processing and repair. Also involved in tRNA surveillance by mediating tandem CCA addition to generate a CCACCA at the 3' terminus of unstable tRNAs. While stable tRNAs receive only 3'-terminal CCA, unstable tRNAs are marked with CCACCA and rapidly degraded. The structural flexibility of RNA controls the choice between CCA versus CCACCA addition: following the first CCA addition cycle, nucleotide-binding to the active site triggers a clockwise screw motion, producing torque on the RNA. This ejects stable RNAs, whereas unstable RNAs are refolded while bound to the enzyme and subjected to a second CCA catalytic cycle. This is CCA-adding enzyme from Geobacillus stearothermophilus (Bacillus stearothermophilus).